The chain runs to 311 residues: Aspartate carbamoyltransferase catalytic subunit (311 aa).

Carbamoyl phosphate is bound by residues R55 and T56. An L-aspartate-binding site is contributed by K85. Carbamoyl phosphate contacts are provided by R106, H134, and Q137. L-aspartate-binding residues include R167 and R228. Carbamoyl phosphate contacts are provided by L266 and P267.

It belongs to the aspartate/ornithine carbamoyltransferase superfamily. ATCase family. As to quaternary structure, heterododecamer (2C3:3R2) of six catalytic PyrB chains organized as two trimers (C3), and six regulatory PyrI chains organized as three dimers (R2).

The catalysed reaction is carbamoyl phosphate + L-aspartate = N-carbamoyl-L-aspartate + phosphate + H(+). The protein operates within pyrimidine metabolism; UMP biosynthesis via de novo pathway; (S)-dihydroorotate from bicarbonate: step 2/3. Its function is as follows. Catalyzes the condensation of carbamoyl phosphate and aspartate to form carbamoyl aspartate and inorganic phosphate, the committed step in the de novo pyrimidine nucleotide biosynthesis pathway. This Psychromonas ingrahamii (strain DSM 17664 / CCUG 51855 / 37) protein is Aspartate carbamoyltransferase catalytic subunit.